The following is a 172-amino-acid chain: Large ribosomal subunit protein uL10 (172 aa).

Belongs to the universal ribosomal protein uL10 family. In terms of assembly, part of the ribosomal stalk of the 50S ribosomal subunit. The N-terminus interacts with L11 and the large rRNA to form the base of the stalk. The C-terminus forms an elongated spine to which L12 dimers bind in a sequential fashion forming a multimeric L10(L12)X complex.

Functionally, forms part of the ribosomal stalk, playing a central role in the interaction of the ribosome with GTP-bound translation factors. In Rhizobium meliloti (strain 1021) (Ensifer meliloti), this protein is Large ribosomal subunit protein uL10.